Reading from the N-terminus, the 125-residue chain is S-adenosylmethionine decarboxylase proenzyme (125 aa).

Catalysis depends on S71, which acts as the Schiff-base intermediate with substrate; via pyruvic acid. S71 carries the pyruvic acid (Ser); by autocatalysis modification. The Proton acceptor; for processing activity role is filled by H76. Catalysis depends on C91, which acts as the Proton donor; for catalytic activity.

The protein belongs to the prokaryotic AdoMetDC family. Type 1 subfamily. In terms of assembly, heterotetramer of two alpha and two beta chains arranged as a dimer of alpha/beta heterodimers. Pyruvate serves as cofactor. Post-translationally, is synthesized initially as an inactive proenzyme. Formation of the active enzyme involves a self-maturation process in which the active site pyruvoyl group is generated from an internal serine residue via an autocatalytic post-translational modification. Two non-identical subunits are generated from the proenzyme in this reaction, and the pyruvate is formed at the N-terminus of the alpha chain, which is derived from the carboxyl end of the proenzyme. The post-translation cleavage follows an unusual pathway, termed non-hydrolytic serinolysis, in which the side chain hydroxyl group of the serine supplies its oxygen atom to form the C-terminus of the beta chain, while the remainder of the serine residue undergoes an oxidative deamination to produce ammonia and the pyruvoyl group blocking the N-terminus of the alpha chain.

The enzyme catalyses S-adenosyl-L-methionine + H(+) = S-adenosyl 3-(methylsulfanyl)propylamine + CO2. Its pathway is amine and polyamine biosynthesis; S-adenosylmethioninamine biosynthesis; S-adenosylmethioninamine from S-adenosyl-L-methionine: step 1/1. Its function is as follows. Catalyzes the decarboxylation of S-adenosylmethionine to S-adenosylmethioninamine (dcAdoMet), the propylamine donor required for the synthesis of the polyamines spermine and spermidine from the diamine putrescine. This chain is S-adenosylmethionine decarboxylase proenzyme, found in Pyrobaculum islandicum (strain DSM 4184 / JCM 9189 / GEO3).